Here is a 291-residue protein sequence, read N- to C-terminus: UDP-N-acetylenolpyruvoylglucosamine reductase (291 aa).

Residues 22–187 (RIGGPARYFK…ASATFQLTKD (166 aa)) form the FAD-binding PCMH-type domain. Arg166 is an active-site residue. The active-site Proton donor is the Cys214. Glu283 is a catalytic residue.

The protein belongs to the MurB family. FAD is required as a cofactor.

It localises to the cytoplasm. The enzyme catalyses UDP-N-acetyl-alpha-D-muramate + NADP(+) = UDP-N-acetyl-3-O-(1-carboxyvinyl)-alpha-D-glucosamine + NADPH + H(+). The protein operates within cell wall biogenesis; peptidoglycan biosynthesis. In terms of biological role, cell wall formation. In Chlamydia trachomatis serovar L2 (strain ATCC VR-902B / DSM 19102 / 434/Bu), this protein is UDP-N-acetylenolpyruvoylglucosamine reductase.